Reading from the N-terminus, the 373-residue chain is Phospho-N-acetylmuramoyl-pentapeptide-transferase (373 aa).

Transmembrane regions (helical) follow at residues 16–36 (WWTK…AASF), 46–66 (LLSL…SWGI), 93–113 (PTMG…FVSV), 120–140 (QLLA…FDDW), 157–177 (LLLQ…QHWI), 185–205 (LGIS…VFLA), 216–236 (LDGL…VQLM), 242–262 (GNPV…GFLM), 270–290 (VFMG…VAIL), 298–318 (LVMG…VWVF), and 350–369 (MVVR…GLLL).

The protein belongs to the glycosyltransferase 4 family. MraY subfamily. Requires Mg(2+) as cofactor.

The protein resides in the cell inner membrane. The catalysed reaction is UDP-N-acetyl-alpha-D-muramoyl-L-alanyl-gamma-D-glutamyl-meso-2,6-diaminopimeloyl-D-alanyl-D-alanine + di-trans,octa-cis-undecaprenyl phosphate = di-trans,octa-cis-undecaprenyl diphospho-N-acetyl-alpha-D-muramoyl-L-alanyl-D-glutamyl-meso-2,6-diaminopimeloyl-D-alanyl-D-alanine + UMP. Its pathway is cell wall biogenesis; peptidoglycan biosynthesis. Functionally, catalyzes the initial step of the lipid cycle reactions in the biosynthesis of the cell wall peptidoglycan: transfers peptidoglycan precursor phospho-MurNAc-pentapeptide from UDP-MurNAc-pentapeptide onto the lipid carrier undecaprenyl phosphate, yielding undecaprenyl-pyrophosphoryl-MurNAc-pentapeptide, known as lipid I. The protein is Phospho-N-acetylmuramoyl-pentapeptide-transferase of Prochlorococcus marinus (strain MIT 9313).